The chain runs to 183 residues: Gamma-crystallin N (183 aa).

Beta/gamma crystallin 'Greek key' domains follow at residues 6–46 (GKIT…RVES), 47–89 (GAWV…RPVG), 95–136 (FRID…KVYG), and 138–180 (GAWV…RRVL).

This sequence belongs to the beta/gamma-crystallin family. As to quaternary structure, monomer. As to expression, primordially eye-specific. Present in lens nucleus. In the retina, expression in observed in the outer plexiform layer (containing photoreceptors axons and synapses) and photoreceptor outer segments (at protein level). Also detected in the auditory hindbrain where it is highly expressed in the medial nucleus of the trapezoid body, but also present in other nuclei of the superior olivary complex.

Its function is as follows. Crystallins are the dominant structural components of the vertebrate eye lens. Also plays an important role for integrity and function of auditory nuclei. This Mus musculus (Mouse) protein is Gamma-crystallin N.